We begin with the raw amino-acid sequence, 244 residues long: 2-C-methyl-D-erythritol 4-phosphate cytidylyltransferase (244 aa).

The protein belongs to the IspD/TarI cytidylyltransferase family. IspD subfamily.

The enzyme catalyses 2-C-methyl-D-erythritol 4-phosphate + CTP + H(+) = 4-CDP-2-C-methyl-D-erythritol + diphosphate. The protein operates within isoprenoid biosynthesis; isopentenyl diphosphate biosynthesis via DXP pathway; isopentenyl diphosphate from 1-deoxy-D-xylulose 5-phosphate: step 2/6. Catalyzes the formation of 4-diphosphocytidyl-2-C-methyl-D-erythritol from CTP and 2-C-methyl-D-erythritol 4-phosphate (MEP). In Prosthecochloris aestuarii (strain DSM 271 / SK 413), this protein is 2-C-methyl-D-erythritol 4-phosphate cytidylyltransferase.